The primary structure comprises 530 residues: UDP-glucuronosyltransferase 2B17 (530 aa).

The signal sequence occupies residues M1–C23. The N-linked (GlcNAc...) asparagine glycan is linked to N65. K136 carries the post-translational modification N6-succinyllysine. 2 N-linked (GlcNAc...) asparagine glycosylation sites follow: N316 and N483. Residues I495 to F515 form a helical membrane-spanning segment.

It belongs to the UDP-glycosyltransferase family. As to expression, expressed in various tissues including the liver, kidney, testis, uterus, placenta, mammary gland, adrenal gland, skin and prostate.

It is found in the endoplasmic reticulum membrane. The catalysed reaction is glucuronate acceptor + UDP-alpha-D-glucuronate = acceptor beta-D-glucuronoside + UDP + H(+). The enzyme catalyses 17alpha-estradiol + UDP-alpha-D-glucuronate = 17alpha-estradiol 3-O-(beta-D-glucuronate) + UDP + H(+). It catalyses the reaction 17alpha-estradiol + UDP-alpha-D-glucuronate = 17alpha-estradiol 17-O-(beta-D-glucuronate) + UDP + H(+). It carries out the reaction 17beta-estradiol + UDP-alpha-D-glucuronate = 17beta-estradiol 17-O-(beta-D-glucuronate) + UDP + H(+). The catalysed reaction is 17beta-hydroxy-5alpha-androstan-3-one + UDP-alpha-D-glucuronate = 5alpha-dihydrotestosterone 17-O-(beta-D-glucuronate) + UDP + H(+). The enzyme catalyses testosterone + UDP-alpha-D-glucuronate = testosterone 17-O-(beta-D-glucuronate) + UDP + H(+). Its function is as follows. UDP-glucuronosyltransferase (UGT) that catalyzes phase II biotransformation reactions in which lipophilic substrates are conjugated with glucuronic acid to increase the metabolite's water solubility, thereby facilitating excretion into either the urine or bile. Catalyzes the glucuronidation of endogenous steroid hormones such as androgens (epitestosterone, androsterone) and estrogens (estradiol, epiestradiol). The protein is UDP-glucuronosyltransferase 2B17 of Homo sapiens (Human).